Consider the following 459-residue polypeptide: Putrescine aminotransferase (459 aa).

Pyridoxal 5'-phosphate-binding positions include 150–151 (GT) and Gln274. Lys300 is modified (N6-(pyridoxal phosphate)lysine). Thr332 provides a ligand contact to pyridoxal 5'-phosphate.

It belongs to the class-III pyridoxal-phosphate-dependent aminotransferase family. Putrescine aminotransferase subfamily. The cofactor is pyridoxal 5'-phosphate.

The catalysed reaction is an alkane-alpha,omega-diamine + 2-oxoglutarate = an omega-aminoaldehyde + L-glutamate. It catalyses the reaction putrescine + 2-oxoglutarate = 1-pyrroline + L-glutamate + H2O. The enzyme catalyses cadaverine + 2-oxoglutarate = 5-aminopentanal + L-glutamate. It functions in the pathway amine and polyamine degradation; putrescine degradation; 4-aminobutanal from putrescine (transaminase route): step 1/1. In terms of biological role, catalyzes the aminotransferase reaction from putrescine to 2-oxoglutarate, leading to glutamate and 4-aminobutanal, which spontaneously cyclizes to form 1-pyrroline. This is the first step in one of two pathways for putrescine degradation, where putrescine is converted into 4-aminobutanoate (gamma-aminobutyrate or GABA) via 4-aminobutanal. Also functions as a cadaverine transaminase in a a L-lysine degradation pathway to succinate that proceeds via cadaverine, glutarate and L-2-hydroxyglutarate. In Escherichia coli (strain ATCC 8739 / DSM 1576 / NBRC 3972 / NCIMB 8545 / WDCM 00012 / Crooks), this protein is Putrescine aminotransferase.